We begin with the raw amino-acid sequence, 655 residues long: p-hydroxybenzoic acid efflux pump subunit AaeB (655 aa).

The next 11 membrane-spanning stretches (helical) occupy residues F13–L33, W38–P58, L69–I89, L93–V113, W121–L141, E152–I172, L370–V390, F407–P427, Q431–V451, M459–F479, and F482–L502.

Belongs to the aromatic acid exporter ArAE (TC 2.A.85) family.

The protein localises to the cell inner membrane. Functionally, forms an efflux pump with AaeA. Could function as a metabolic relief valve, allowing to eliminate certain compounds when they accumulate to high levels in the cell. The polypeptide is p-hydroxybenzoic acid efflux pump subunit AaeB (Escherichia coli O81 (strain ED1a)).